A 431-amino-acid polypeptide reads, in one-letter code: 3-phosphoshikimate 1-carboxyvinyltransferase (431 aa).

3-phosphoshikimate contacts are provided by lysine 26, serine 27, and arginine 31. Residue lysine 26 coordinates phosphoenolpyruvate. The phosphoenolpyruvate site is built by glycine 99 and arginine 127. 3-phosphoshikimate contacts are provided by serine 170, serine 171, glutamine 172, serine 199, glutamate 314, and histidine 343. Residue glutamine 172 coordinates phosphoenolpyruvate. Glutamate 314 (proton acceptor) is an active-site residue. Residues arginine 347, arginine 388, and lysine 413 each coordinate phosphoenolpyruvate.

This sequence belongs to the EPSP synthase family. As to quaternary structure, monomer.

The protein resides in the cytoplasm. The catalysed reaction is 3-phosphoshikimate + phosphoenolpyruvate = 5-O-(1-carboxyvinyl)-3-phosphoshikimate + phosphate. Its pathway is metabolic intermediate biosynthesis; chorismate biosynthesis; chorismate from D-erythrose 4-phosphate and phosphoenolpyruvate: step 6/7. Catalyzes the transfer of the enolpyruvyl moiety of phosphoenolpyruvate (PEP) to the 5-hydroxyl of shikimate-3-phosphate (S3P) to produce enolpyruvyl shikimate-3-phosphate and inorganic phosphate. This is 3-phosphoshikimate 1-carboxyvinyltransferase from Mycobacterium ulcerans (strain Agy99).